A 461-amino-acid polypeptide reads, in one-letter code: MSFRSVLLTALLSLSFTTTMQAAHHHYHRYTDKLHRQNHKKDLISPKPTEQEACNTSSLSKELIPLSEQRGLLSPICDFISERPCLHGVSVRNLKQALKNSAGTQIALDWSILPQWFNPRVSHAPKLSIRDFGYSAHQTVTEATPPCWQNCFNPSAAVTIYDSSYGKGVFQISYTLVRYWRENAATAGDAMMLAGSINDYPSRQNIFSQFTFSQNFPNERVSLTIGQYSLYAIDGTLYNNDQQLGFISYALSQNPTATYSSGSLGAYLQVAPTASTSLQIGFQDAYNISGSSIKWSNLTKNRYNFHGFASWAPRCCLGSGQYSVLLYVTRQVPEQMEQTMGWSVNASQYISSKLYVFGRYSGVTGHVFPINRTYSFGMASANLFNRNPQDLFGIACAFNNVHLSASPNTKRKYETVIEGFAAIGCGPYLSFAPDFQLYLYPALRPNKQSARVYSVRANLAI.

Residues 1–22 (MSFRSVLLTALLSLSFTTTMQA) form the signal peptide.

Belongs to the OprB family.

It is found in the cell outer membrane. Its function is as follows. Facilitates L-arginine uptake, as part of the AaxABC system. The arginine uptake by the bacterium in the macrophage may be a virulence factor against the host innate immune response. The polypeptide is Porin AaxA (aaxA) (Chlamydia trachomatis serovar A (strain ATCC VR-571B / DSM 19440 / HAR-13)).